Consider the following 513-residue polypeptide: Alpha-amylase mde5 (513 aa).

Residues 1–25 form the signal peptide; sequence MKHNEVFGWTLKVLSFLLVVIPANA. C52 and C60 are joined by a disulfide. Position 105 (W105) interacts with substrate. A Ca(2+)-binding site is contributed by N143. Residue H144 coordinates substrate. N162 carries an N-linked (GlcNAc...) asparagine glycan. The cysteines at positions 171 and 184 are disulfide-linked. Positions 182 and 195 each coordinate Ca(2+). A substrate-binding site is contributed by R224. Residues D226, H230, and E250 each contribute to the Ca(2+) site. The active-site Nucleophile is D226. 229 to 230 provides a ligand contact to substrate; sequence KH. E250 functions as the Proton donor in the catalytic mechanism. Substrate is bound at residue G254. Cysteines 260 and 304 form a disulfide. A substrate-binding site is contributed by D318. N357 carries an N-linked (GlcNAc...) asparagine glycan. Position 365 (R365) interacts with substrate. A disulfide bridge links C454 with C488.

This sequence belongs to the glycosyl hydrolase 13 family. It depends on Ca(2+) as a cofactor.

The protein localises to the endoplasmic reticulum. It catalyses the reaction Endohydrolysis of (1-&gt;4)-alpha-D-glucosidic linkages in polysaccharides containing three or more (1-&gt;4)-alpha-linked D-glucose units.. The sequence is that of Alpha-amylase mde5 (mde5) from Schizosaccharomyces pombe (strain 972 / ATCC 24843) (Fission yeast).